Reading from the N-terminus, the 190-residue chain is Crossover junction endodeoxyribonuclease RuvC (190 aa).

Residues aspartate 8, glutamate 67, and aspartate 139 contribute to the active site. Mg(2+) is bound by residues aspartate 8, glutamate 67, and aspartate 139.

It belongs to the RuvC family. Homodimer which binds Holliday junction (HJ) DNA. The HJ becomes 2-fold symmetrical on binding to RuvC with unstacked arms; it has a different conformation from HJ DNA in complex with RuvA. In the full resolvosome a probable DNA-RuvA(4)-RuvB(12)-RuvC(2) complex forms which resolves the HJ. Mg(2+) serves as cofactor.

It localises to the cytoplasm. The enzyme catalyses Endonucleolytic cleavage at a junction such as a reciprocal single-stranded crossover between two homologous DNA duplexes (Holliday junction).. In terms of biological role, the RuvA-RuvB-RuvC complex processes Holliday junction (HJ) DNA during genetic recombination and DNA repair. Endonuclease that resolves HJ intermediates. Cleaves cruciform DNA by making single-stranded nicks across the HJ at symmetrical positions within the homologous arms, yielding a 5'-phosphate and a 3'-hydroxyl group; requires a central core of homology in the junction. The consensus cleavage sequence is 5'-(A/T)TT(C/G)-3'. Cleavage occurs on the 3'-side of the TT dinucleotide at the point of strand exchange. HJ branch migration catalyzed by RuvA-RuvB allows RuvC to scan DNA until it finds its consensus sequence, where it cleaves and resolves the cruciform DNA. The polypeptide is Crossover junction endodeoxyribonuclease RuvC (Haemophilus influenzae (strain PittGG)).